The primary structure comprises 325 residues: uncharacterized protein (325 aa).

A disordered region spans residues 37 to 85 (EKPTYTPAKPVKKAPSVVQPRRVSRTLRSSESVHTNHGPERVFESPTPA). A Phosphoserine modification is found at S52. Polar residues predominate over residues 62–71 (TLRSSESVHT). Positions 153–311 (EDEGKKCLIL…IDLIPFLEHL (159 aa)) constitute an FCP1 homology domain.

This is an uncharacterized protein from Schizosaccharomyces pombe (strain 972 / ATCC 24843) (Fission yeast).